Here is a 105-residue protein sequence, read N- to C-terminus: uncharacterized protein (105 aa).

The protein belongs to the EspC family.

May be involved in assembly of the ESX-1 / type VII specialized secretion system (T7SS), which exports several proteins including EsxA and EsxB. Involved in DNA conjugation, in at least recipient strain. This is an uncharacterized protein from Mycolicibacterium smegmatis (strain MKD8) (Mycobacterium smegmatis).